Reading from the N-terminus, the 999-residue chain is Sarcoplasmic/endoplasmic reticulum calcium ATPase 3 (999 aa).

The Cytoplasmic portion of the chain corresponds to 1–48 (MEAAHSVPVQDVLSRFGVAESCGLSPEQVRRNREKYGPNELPAEERKS). A helical membrane pass occupies residues 49–69 (LWELVLEQFEDLLVRILLMAA). The Lumenal segment spans residues 70–89 (FLSFILAWFEEGEESTTAFV). The chain crosses the membrane as a helical span at residues 90–110 (EPIVIIMILIANAVVGVWQER). Residues 111–253 (NAESAIEALK…PEKTPLQQKL (143 aa)) are Cytoplasmic-facing. The helical transmembrane segment at 254–273 (DEFSQQLSKVIFLVCIAVWV) threads the bilayer. The Lumenal segment spans residues 274 to 295 (INISHFSDPVHGGSWFRGAIYY). The helical transmembrane segment at 296 to 313 (FKTSVALAVAAIPEGLPA) threads the bilayer. Ca(2+)-binding residues include valine 304, alanine 305, isoleucine 307, and glutamate 309. Over 314–757 (VITTCLALGT…EEGRAIYNNM (444 aa)) the chain is Cytoplasmic. Catalysis depends on aspartate 351, which acts as the 4-aspartylphosphate intermediate. Residues aspartate 351 and threonine 353 each contribute to the Mg(2+) site. Position 353 (threonine 353) interacts with ATP. An interaction with phospholamban 1 region spans residues 370-400 (EKVEGTQCSLHEFSITGSTYAPEGQILKDEK). The ATP site is built by glutamate 442, arginine 489, lysine 515, arginine 560, threonine 625, glycine 626, aspartate 627, arginine 678, and lysine 684. Aspartate 703 serves as a coordination point for Mg(2+). Residue asparagine 706 coordinates ATP. The helical transmembrane segment at 758–777 (KQFIRYLISSNVGEVVCIFL) threads the bilayer. Positions 768 and 771 each coordinate Ca(2+). The Lumenal portion of the chain corresponds to 778–787 (TAILGLPEAL). Residues 788–808 (IPVQLLWVNLVTDGLPATALG) form a helical membrane-spanning segment. The segment at 788-808 (IPVQLLWVNLVTDGLPATALG) is interaction with phospholamban 2. Residues asparagine 796, threonine 799, and aspartate 800 each coordinate Ca(2+). Residues 809–828 (FNPPDLDIMDKLPRNPKEPL) are Cytoplasmic-facing. A helical membrane pass occupies residues 829–851 (ISGWLFFRYLAIGVYVGLATVGA). Residues 852–897 (ATWWFLYDAEGPQVSFHQLRNFMRCTEDNPIFEGVNCEIFESRYPT) are Lumenal-facing. A helical transmembrane segment spans residues 898–917 (TMALSVLVTIEMCNALNSVS). Glutamate 908 contributes to the Ca(2+) binding site. The Cytoplasmic segment spans residues 918–930 (ENQSLLRMPPWLN). The chain crosses the membrane as a helical span at residues 931 to 949 (IWLLGAIVMSMALHFFILY). The Lumenal portion of the chain corresponds to 950 to 964 (VKPMPLIFQVTPLSW). The helical transmembrane segment at 965–985 (PQWVVVLKISLPVILLDEGLK) threads the bilayer. Residues 986–999 (YLSRNHLEGEEDKK) are Cytoplasmic-facing.

It belongs to the cation transport ATPase (P-type) (TC 3.A.3) family. Type IIA subfamily. In terms of assembly, interacts with sarcolipin (SLN). Interacts with phospholamban (PLN). Interacts with myoregulin (MRLN). Interacts with DWORF. It depends on Mg(2+) as a cofactor. Found in spleen, lung, intestine and brain.

The protein resides in the endoplasmic reticulum membrane. The protein localises to the sarcoplasmic reticulum membrane. The enzyme catalyses Ca(2+)(in) + ATP + H2O = Ca(2+)(out) + ADP + phosphate + H(+). Its activity is regulated as follows. Inhibited by sarcolipin (SLN), phospholamban (PLN) and myoregulin (MRLN). Enhanced by DWORF; DWORF increases activity by displacing sarcolipin (SLN), phospholamban (PLN) and myoregulin (MRLN). In terms of biological role, this magnesium-dependent enzyme catalyzes the hydrolysis of ATP coupled with the transport of calcium. Transports calcium ions from the cytosol into the sarcoplasmic/endoplasmic reticulum lumen. Contributes to calcium sequestration involved in muscular excitation/contraction. This Gallus gallus (Chicken) protein is Sarcoplasmic/endoplasmic reticulum calcium ATPase 3 (ATP2A3).